The sequence spans 1452 residues: Pleiotropic drug resistance protein 1 (1452 aa).

One can recognise an ABC transporter 1 domain in the interval 152–425 (LNYLHILPNR…FEYMGFICPE (274 aa)). 185–192 (GPPSSGKT) serves as a coordination point for ATP. The ABC transmembrane type-2 1 domain occupies 504-716 (LLKACTAREY…AQNAIAVNEF (213 aa)). The next 7 helical transmembrane spans lie at 521–541 (FVYIFKMIQLTLMASITMTLF), 554–574 (GAVFLGALFYALIMIMFNGFS), 609–629 (IPITLVEVAIWVCMTYYVIGF), 640–660 (LLLLICVNQMASGLFRLMGAL), 664–684 (IIVANTFGSFVLLTVLVMGGF), 694–714 (WWIWGYWISPMMYAQNAIAVN), and 753–773 (IGAGALIGYVFLFNFLFAVAL). The segment at 808–830 (LGKSSSEKGNDVRRSASSRSMSS) is disordered. The segment covering 812-821 (SSEKGNDVRR) has biased composition (basic and acidic residues). Residues 855–1107 (ITFDDIRYAV…HLIKYFEGID (253 aa)) form the ABC transporter 2 domain. Residue 900 to 907 (GVSGAGKT) coordinates ATP. Residues 1180–1394 (TQCMACFWKQ…TLYGLIASQF (215 aa)) form the ABC transmembrane type-2 2 domain. Transmembrane regions (helical) follow at residues 1199–1219 (YTAVRIMFTFFIALMFGTIFW), 1239–1259 (YIAVLFLGVQNATTVQPVIAI), 1287–1307 (LPYLFLQTIIYGVIVYAMIGF), 1314–1334 (FFWYLFFMYFTLLYFTLYGMM), 1344–1364 (IAAIISSAFYAVWNLFCGFIV), 1375–1395 (WYYYICPISWTLYGLIASQFG), and 1421–1441 (FVGYVALILVGISVLFLFIFA).

The protein belongs to the ABC transporter superfamily. ABCG family. PDR (TC 3.A.1.205) subfamily. As to expression, expressed in root hypodermal passage cells. Expressed in stem tissues, particularly the vasculature and nodes adjacent to leaf axils.

It is found in the cell membrane. Functionally, cellular strigolactone (SL) transporter required for the exudation of SL from the root to the soil. The presence of SL in the vicinity of the roots is required for development of symbiotic interactions with arbuscular mycorrhizal fungi (AMF). Transports SL in the above ground tissues and is required for the control of shoot branching. SL regulates plant shoot architecture by inhibiting the outgrowth of axillary buds. Involved in the regulation of shootward and outward directional strigolactone transport in roots. Due to its polar localization in root cells, mediates directional shootward strigolactone transport, as well as localized outward directional transport for exudation to the soil. The protein is Pleiotropic drug resistance protein 1 of Petunia axillaris (Large white petunia).